A 370-amino-acid chain; its full sequence is 3-dehydroquinate synthase (370 aa).

NAD(+) contacts are provided by residues 108 to 112, 132 to 133, K145, and K154; these read GVIGD and TT. Zn(2+) is bound by residues E187, H249, and H267.

The protein belongs to the sugar phosphate cyclases superfamily. Dehydroquinate synthase family. Requires Co(2+) as cofactor. Zn(2+) is required as a cofactor. The cofactor is NAD(+).

The protein localises to the cytoplasm. It carries out the reaction 7-phospho-2-dehydro-3-deoxy-D-arabino-heptonate = 3-dehydroquinate + phosphate. The protein operates within metabolic intermediate biosynthesis; chorismate biosynthesis; chorismate from D-erythrose 4-phosphate and phosphoenolpyruvate: step 2/7. Catalyzes the conversion of 3-deoxy-D-arabino-heptulosonate 7-phosphate (DAHP) to dehydroquinate (DHQ). The polypeptide is 3-dehydroquinate synthase (Cereibacter sphaeroides (strain KD131 / KCTC 12085) (Rhodobacter sphaeroides)).